The chain runs to 131 residues: Transcriptional activator protein (131 aa).

Residues 13–28 (KAQHRIAKKRAVRRRR) carry the Nuclear localization signal motif. Residues 33–52 (CGCSIYIHINCAKDGNGFTH) fold into a zinc finger. The segment at 78-131 (DVQXGGSTLHAHKDIPHTNPVQPQPEESTKSSQSVPELPSLDGIDSSFWDDIFE) is disordered. Positions 117–131 (SLDGIDSSFWDDIFE) are transactivation.

It belongs to the geminiviridae transcriptional activator protein family. As to quaternary structure, monomer. Homodimer. Homooligomer. Self-interaction correlates with nuclear localization and efficient activation of transcription. Monomers suppress local silencing by interacting with and inactivating host adenosine kinase 2 (ADK2) in the cytoplasm. Interacts with and inhibits host SNF1 kinase. Binds to ssDNA. In terms of processing, phosphorylated.

The protein localises to the host nucleus. It is found in the host cytoplasm. Strong activator of the late viral genes promoters. Enhances the expression of the capsid protein and nuclear shuttle protein. Acts as a suppressor of RNA-mediated gene silencing, also known as post-transcriptional gene silencing (PTGS), a mechanism of plant viral defense that limits the accumulation of viral RNAs. Suppresses the host RNA silencing by inhibiting adenosine kinase 2 (ADK2), a kinase involved in a general methylation pathway. Also suppresses the host basal defense by interacting with and inhibiting SNF1 kinase, a key regulator of cell metabolism implicated in innate antiviral defense. Determines pathogenicity. The polypeptide is Transcriptional activator protein (Cucurbita moschata (Winter crookneck squash)).